The chain runs to 300 residues: MQFHSSSALITPFKKDLSVDEAAYESLIKRQILQGMDACVPVGTTGESATLTHKEHMRCIEIAIETCKNTKTPSNSCMKVLAGVGSNATSESLSLAKFAQKIGADAILCVSPYYNRPTQQGLFEHYKTIAQSVEIPVMLYDVPSRTGVSIEVPTALKLFREVPNIKAIKEASGSLKRVTELHYYEKDFKIFSGEDSLNHSIMFSGGCGVISVTGNLMPNLISQMVNCALKQKYQQALEIQNKLFHLHQALFVETNPIPIKMAMHLAGLIENPSYRLPLVAPSKETIQLLEKTLQQYEVIA.

Thr-45 contacts pyruvate. Tyr-140 functions as the Proton donor/acceptor in the catalytic mechanism. Lys-169 (schiff-base intermediate with substrate) is an active-site residue. A pyruvate-binding site is contributed by Ile-210.

The protein belongs to the DapA family. As to quaternary structure, homotetramer; dimer of dimers.

Its subcellular location is the cytoplasm. It carries out the reaction L-aspartate 4-semialdehyde + pyruvate = (2S,4S)-4-hydroxy-2,3,4,5-tetrahydrodipicolinate + H2O + H(+). Its pathway is amino-acid biosynthesis; L-lysine biosynthesis via DAP pathway; (S)-tetrahydrodipicolinate from L-aspartate: step 3/4. Functionally, catalyzes the condensation of (S)-aspartate-beta-semialdehyde [(S)-ASA] and pyruvate to 4-hydroxy-tetrahydrodipicolinate (HTPA). The chain is 4-hydroxy-tetrahydrodipicolinate synthase from Helicobacter pylori (strain HPAG1).